A 227-amino-acid polypeptide reads, in one-letter code: MPENPSSSPTEPPEQSAAFEKWRSGLAQFTGLGLSESEKAERERLKAQGKLAKDWDKCEGWKRDLMNYSPMITFLLNHLKLAGCPFPSSAMQCHPCPENRAGGFSPDHGILLCQDRFFNKKHMEDTLAHELVHAFDHCRFKVDWGNLRHHACSEIRAANLSGDCRFTREVKRGFYAFNKQHQACVKRRAILSVLANPACTSPEMAERAVNEVWESCFTDTRPFDEIY.

Position 129 (histidine 129) interacts with a divalent metal cation. Glutamate 130 is a catalytic residue. Residue histidine 133 coordinates a divalent metal cation.

This sequence belongs to the peptidase M76 family.

It localises to the mitochondrion inner membrane. Its function is as follows. Has a dual role in the assembly of mitochondrial ATPase. Acts as a protease that removes N-terminal residues of mitochondrial ATPase CF(0) subunit 6 at the intermembrane space side. Also involved in the correct assembly of the membrane-embedded ATPase CF(0) particle, probably mediating association of subunit 6 with the subunit 9 ring. This chain is Mitochondrial inner membrane protease ATP23 (ATP23), found in Cryptococcus neoformans var. neoformans serotype D (strain B-3501A) (Filobasidiella neoformans).